A 432-amino-acid polypeptide reads, in one-letter code: Histidine--tRNA ligase (432 aa).

Residues 412–432 are disordered; it reads TQVPLAAFPPEEGRPTYDDYA. Over residues 422-432 the composition is skewed to basic and acidic residues; it reads EEGRPTYDDYA.

The protein belongs to the class-II aminoacyl-tRNA synthetase family.

Its subcellular location is the cytoplasm. The enzyme catalyses tRNA(His) + L-histidine + ATP = L-histidyl-tRNA(His) + AMP + diphosphate + H(+). This chain is Histidine--tRNA ligase, found in Natronomonas pharaonis (strain ATCC 35678 / DSM 2160 / CIP 103997 / JCM 8858 / NBRC 14720 / NCIMB 2260 / Gabara) (Halobacterium pharaonis).